Consider the following 217-residue polypeptide: UDP-N-acetylglucosamine transferase subunit ALG14 (217 aa).

Residues 1–3 lie on the Lumenal side of the membrane; sequence MLS. A helical transmembrane segment spans residues 4–26; the sequence is ILILAATAAGLVILLFQRLWTVL. Topologically, residues 27 to 217 are cytoplasmic; it reads GPHHVTPRES…PKSVYLGRIV (191 aa).

It belongs to the ALG14 family. As to quaternary structure, forms with ALG13 the active heterodimeric UDP-N-acetylglucosamine transferase complex.

The protein resides in the endoplasmic reticulum membrane. Its function is as follows. Part of the UDP-N-acetylglucosamine transferase complex that operates in the biosynthetic pathway of dolichol-linked oligosaccharides, the glycan precursors employed in protein asparagine (N)-glycosylation. The assembly of dolichol-linked oligosaccharides begins on the cytosolic side of the endoplasmic reticulum membrane and finishes in its lumen. The sequential addition of sugars to dolichol pyrophosphate produces dolichol-linked oligosaccharides containing fourteen sugars, including two GlcNAcs, nine mannoses and three glucoses. Once assembled, the oligosaccharides are transferred from the lipid to nascent proteins by oligosaccharyltransferases. Functions as a protein-membrane adapter recruiting ALG13 at the cytoplasmic face of the endoplasmic reticulum, where the complex catalyzes the second step of dolichol pyrophosphate biosynthesis, transferring a beta1,4-linked N-acetylglucosamine (GlcNAc) from UDP-GlcNAc to GlcNAc-pyrophosphatedolichol (Gn-PDol) to produce N,N'-diacetylchitobiosyl diphosphodolichol. N,N'-diacetylchitobiosyl diphosphodolichol is a substrate for ALG1, the following enzyme in the biosynthetic pathway. This chain is UDP-N-acetylglucosamine transferase subunit ALG14, found in Mus musculus (Mouse).